The primary structure comprises 331 residues: GTP-binding protein RHO5 (331 aa).

GTP is bound at residue G10–T17. Residues A51–T76 form a disordered region. A compositionally biased stretch (low complexity) spans S66–S75. Residues D87–Q91 and T156–D159 contribute to the GTP site. Residues S223 and S228 each carry the phosphoserine modification. Residues T232 and T244 each carry the phosphothreonine modification. Residues T239–L331 form a disordered region. The segment covering H258–Q273 has biased composition (polar residues). Residue K276 forms a Glycyl lysine isopeptide (Lys-Gly) (interchain with G-Cter in ubiquitin) linkage. Positions G287 to K297 are enriched in basic and acidic residues. A compositionally biased stretch (basic residues) spans H308–L331. C328 carries the post-translational modification Cysteine methyl ester. A lipid anchor (S-geranylgeranyl cysteine) is attached at C328. The propeptide at V329 to L331 is removed in mature form.

This sequence belongs to the small GTPase superfamily. Rho family. In terms of assembly, interacts with RGD2.

The protein resides in the membrane. It localises to the mitochondrion. Small GTPase that negatively regulates a MAP kinase branch, downstream of SLT2, of the PKC1-mediated signal transduction pathway. With its specific guanine nucleotide exchange factor (GEF), the heterodimeric complex DCK1/LMO1, relocates to mitochondria upon oxidative stress and triggers cell death. The DCK1/LMO1/RHO5 signaling module that mediates mitochondrial turnover under nitrogen starvation conditions via mitophagy. The DCK1/LMO1/RHO5 signaling module also plays a role in cell wall integrity signaling. The chain is GTP-binding protein RHO5 from Saccharomyces cerevisiae (strain ATCC 204508 / S288c) (Baker's yeast).